The following is a 457-amino-acid chain: Argininosuccinate lyase (457 aa).

Belongs to the lyase 1 family. Argininosuccinate lyase subfamily.

It localises to the cytoplasm. The enzyme catalyses 2-(N(omega)-L-arginino)succinate = fumarate + L-arginine. The protein operates within amino-acid biosynthesis; L-arginine biosynthesis; L-arginine from L-ornithine and carbamoyl phosphate: step 3/3. The polypeptide is Argininosuccinate lyase (Aquifex aeolicus (strain VF5)).